The chain runs to 228 residues: 2-C-methyl-D-erythritol 4-phosphate cytidylyltransferase (228 aa).

This sequence belongs to the IspD/TarI cytidylyltransferase family. IspD subfamily.

The enzyme catalyses 2-C-methyl-D-erythritol 4-phosphate + CTP + H(+) = 4-CDP-2-C-methyl-D-erythritol + diphosphate. Its pathway is isoprenoid biosynthesis; isopentenyl diphosphate biosynthesis via DXP pathway; isopentenyl diphosphate from 1-deoxy-D-xylulose 5-phosphate: step 2/6. In terms of biological role, catalyzes the formation of 4-diphosphocytidyl-2-C-methyl-D-erythritol from CTP and 2-C-methyl-D-erythritol 4-phosphate (MEP). The polypeptide is 2-C-methyl-D-erythritol 4-phosphate cytidylyltransferase (Crocosphaera subtropica (strain ATCC 51142 / BH68) (Cyanothece sp. (strain ATCC 51142))).